Here is a 296-residue protein sequence, read N- to C-terminus: Bifunctional protein FolD (296 aa).

NADP(+) is bound by residues 166–168, serine 191, and isoleucine 232; that span reads GRS.

It belongs to the tetrahydrofolate dehydrogenase/cyclohydrolase family. As to quaternary structure, homodimer.

It carries out the reaction (6R)-5,10-methylene-5,6,7,8-tetrahydrofolate + NADP(+) = (6R)-5,10-methenyltetrahydrofolate + NADPH. It catalyses the reaction (6R)-5,10-methenyltetrahydrofolate + H2O = (6R)-10-formyltetrahydrofolate + H(+). The protein operates within one-carbon metabolism; tetrahydrofolate interconversion. Catalyzes the oxidation of 5,10-methylenetetrahydrofolate to 5,10-methenyltetrahydrofolate and then the hydrolysis of 5,10-methenyltetrahydrofolate to 10-formyltetrahydrofolate. The polypeptide is Bifunctional protein FolD (Cereibacter sphaeroides (strain ATCC 17025 / ATH 2.4.3) (Rhodobacter sphaeroides)).